Here is a 1484-residue protein sequence, read N- to C-terminus: DNA-directed RNA polymerase subunit beta' (1484 aa).

Zn(2+) contacts are provided by C67, C69, C82, and C85. Residues D499, D501, and D503 each coordinate Mg(2+). 4 residues coordinate Zn(2+): C867, C943, C950, and C953.

The protein belongs to the RNA polymerase beta' chain family. As to quaternary structure, the RNAP catalytic core consists of 2 alpha, 1 beta, 1 beta' and 1 omega subunit. When a sigma factor is associated with the core the holoenzyme is formed, which can initiate transcription. It depends on Mg(2+) as a cofactor. Requires Zn(2+) as cofactor.

The enzyme catalyses RNA(n) + a ribonucleoside 5'-triphosphate = RNA(n+1) + diphosphate. In terms of biological role, DNA-dependent RNA polymerase catalyzes the transcription of DNA into RNA using the four ribonucleoside triphosphates as substrates. This chain is DNA-directed RNA polymerase subunit beta', found in Chlorobium phaeovibrioides (strain DSM 265 / 1930) (Prosthecochloris vibrioformis (strain DSM 265)).